A 357-amino-acid polypeptide reads, in one-letter code: S-adenosylmethionine:tRNA ribosyltransferase-isomerase (357 aa).

Belongs to the QueA family. Monomer.

The protein localises to the cytoplasm. The catalysed reaction is 7-aminomethyl-7-carbaguanosine(34) in tRNA + S-adenosyl-L-methionine = epoxyqueuosine(34) in tRNA + adenine + L-methionine + 2 H(+). The protein operates within tRNA modification; tRNA-queuosine biosynthesis. Its function is as follows. Transfers and isomerizes the ribose moiety from AdoMet to the 7-aminomethyl group of 7-deazaguanine (preQ1-tRNA) to give epoxyqueuosine (oQ-tRNA). The polypeptide is S-adenosylmethionine:tRNA ribosyltransferase-isomerase (Buchnera aphidicola subsp. Acyrthosiphon pisum (strain Tuc7)).